Reading from the N-terminus, the 158-residue chain is Transcriptional repressor NrdR (158 aa).

Residues 1–22 form a disordered region; sequence MRCPYCGSEDTQVKDSRPAEDN. The segment at 3-34 is a zinc-finger region; it reads CPYCGSEDTQVKDSRPAEDNTSIRRRRICPDC. Basic and acidic residues predominate over residues 11–22; the sequence is TQVKDSRPAEDN. One can recognise an ATP-cone domain in the interval 49-139; it reads LMVIKKTGRK…VYRDFSLAED (91 aa).

The protein belongs to the NrdR family. Zn(2+) is required as a cofactor.

Functionally, negatively regulates transcription of bacterial ribonucleotide reductase nrd genes and operons by binding to NrdR-boxes. This Rhizobium etli (strain CIAT 652) protein is Transcriptional repressor NrdR.